Reading from the N-terminus, the 553-residue chain is 5'-nucleotidase (553 aa).

A signal peptide spans 1–21 (MKQGLILKSVLSAAIIASLAG). A lipid anchor (N-palmitoyl cysteine) is attached at Cys-22. Cys-22 carries the S-diacylglycerol cysteine lipid modification. Residues Asp-45, His-47, Asp-88, Asn-120, His-221, His-256, and Gln-258 each coordinate a divalent metal cation. Residues Phe-432 and 501-507 (FNAAGGD) each bind substrate.

It belongs to the 5'-nucleotidase family. The cofactor is chloride. Mg(2+) is required as a cofactor.

Its subcellular location is the cell outer membrane. The enzyme catalyses a ribonucleoside 5'-phosphate + H2O = a ribonucleoside + phosphate. Its function is as follows. Degradation of extracellular 5'-nucleotides for nutritional needs. This Vibrio cholerae serotype O1 (strain ATCC 39315 / El Tor Inaba N16961) protein is 5'-nucleotidase (nutA).